A 246-amino-acid polypeptide reads, in one-letter code: Nodulin-25 (246 aa).

Residues 1-24 (MVYSNTYMLLGLGVFVLLSSHVLA) form the signal peptide.

The protein resides in the symbiosome. It is found in the peribacteroid space. Its function is as follows. Involved in the development and function of nodules. It might participate in the biological process of symbiotic nitrogen fixation. This chain is Nodulin-25 (NMS-25), found in Medicago sativa (Alfalfa).